The chain runs to 340 residues: Geranylgeranyl pyrophosphate synthase atmG (340 aa).

The span at 19 to 48 (NLDASYPTSSSLSTEPIDTRSSSPQGSAST) shows a compositional bias: polar residues. Positions 19–51 (NLDASYPTSSSLSTEPIDTRSSSPQGSASTPVD) are disordered. Isopentenyl diphosphate-binding residues include K69, R72, and H101. Mg(2+) contacts are provided by D108 and D112. R117 lines the dimethylallyl diphosphate pocket. R118 serves as a coordination point for isopentenyl diphosphate. The dimethylallyl diphosphate site is built by K195, T196, and Q229. A Mg(2+)-binding site is contributed by D232. Residues N236, K246, and K256 each coordinate dimethylallyl diphosphate.

It belongs to the FPP/GGPP synthase family. It depends on Mg(2+) as a cofactor.

It catalyses the reaction isopentenyl diphosphate + dimethylallyl diphosphate = (2E)-geranyl diphosphate + diphosphate. The catalysed reaction is isopentenyl diphosphate + (2E)-geranyl diphosphate = (2E,6E)-farnesyl diphosphate + diphosphate. The enzyme catalyses isopentenyl diphosphate + (2E,6E)-farnesyl diphosphate = (2E,6E,10E)-geranylgeranyl diphosphate + diphosphate. Functionally, geranylgeranyl pyrophosphate synthase; part of the ATM1 gene cluster that mediates the biosynthesis of aflatrem, a tremorgenic mycotoxin with acute neurotoxic effects. Synthesis of geranylgeranyl diphosphate (GGPP) by AtmG (a GGPP synthase) precedes condensation of GGPP with indole 3-glycerol phosphate, followed by epoxidation and cyclization by AtmM (a FAD-dependent monooxygenase) and AtmC (a prenyltransferase) to produce paspaline. AtmB is also essential for paspaline production, but its exact role has not been identified yet. AtmP, a cytochrome P450 monooxygenase, subsequently converts paspaline to 13-desoxypaxilline via PC-M6 by removal of the C-30 methyl group and oxidation at C-10. AtmQ, a cytochrome P450 monooxygenase, then catalyzes the oxidation of 13-desoxypaxilline, first at C-7 to produce paspalicine and then at C-13 to form paspalinine. Finally, AtmD prenylates paspalinine to form aflatrem. In Aspergillus flavus, this protein is Geranylgeranyl pyrophosphate synthase atmG.